The following is a 188-amino-acid chain: Adenine phosphoribosyltransferase (188 aa).

134–138 (ATGGS) contacts AMP.

The protein belongs to the purine/pyrimidine phosphoribosyltransferase family. In terms of assembly, homodimer. Mg(2+) is required as a cofactor.

It is found in the cytoplasm. The protein resides in the nucleus. The catalysed reaction is AMP + diphosphate = 5-phospho-alpha-D-ribose 1-diphosphate + adenine. Its pathway is purine metabolism; AMP biosynthesis via salvage pathway; AMP from adenine: step 1/1. In terms of biological role, catalyzes a salvage reaction resulting in the formation of AMP, that is energically less costly than de novo synthesis. The sequence is that of Adenine phosphoribosyltransferase (APT1) from Candida albicans (strain SC5314 / ATCC MYA-2876) (Yeast).